The primary structure comprises 1151 residues: Semaphorin-5B (1151 aa).

Over 1 to 1036 (MPCGFSPSPV…TDCAGFNLIH (1036 aa)) the chain is Extracellular. The 451-residue stretch at 103 to 553 (HPTVAFEDLQ…LRDGVLRVPL (451 aa)) folds into the Sema domain. An N-linked (GlcNAc...) asparagine glycan is attached at N153. 2 disulfide bridges follow: C172-C182 and C199-C208. N236 and N345 each carry an N-linked (GlcNAc...) asparagine glycan. 2 disulfide bridges follow: C322-C425 and C346-C388. N-linked (GlcNAc...) asparagine glycosylation occurs at N436. A PSI domain is found at 555-602 (RCAAYRSQGACLGARDPYCGWDGKQQRCSTLEDSSNMSLWTQNITACP). 2 consecutive TSP type-1 domains span residues 664–720 (NGAW…TPCP) and 722–771 (PIFW…EGCP). 6 disulfide bridges follow: C676–C713, C680–C719, C691–C703, C734–C765, C738–C770, and C749–C755. T788 carries an O-linked (GalNAc...) threonine glycan. 3 consecutive TSP type-1 domains span residues 853–908 (SGGW…QACP), 910–965 (RGAW…QACP), and 966–1010 (EGWS…RPCP). Cystine bridges form between C865-C902, C869-C907, C880-C892, C922-C959, C926-C964, and C937-C949. A helical; Signal-anchor for type III membrane protein transmembrane segment spans residues 1037–1057 (LVATGISCFLGSGLLTLAVYL). At 1058-1151 (SCQHCQRQSQ…SPGQRCFPNS (94 aa)) the chain is on the cytoplasmic side.

Belongs to the semaphorin family.

Its subcellular location is the membrane. Functionally, may act as a positive axonal guidance cue. This is Semaphorin-5B (SEMA5B) from Homo sapiens (Human).